Reading from the N-terminus, the 1616-residue chain is MAYTQTATTSALLDTVRGNNSLVNDLAKRRLYDTAVEEFNARDRRPKVNFSKVISEEQTLIATRAYPEFQITFYNTQNAVHSLAGGLRSLELEYLMMQIPYGSLTYDIGGNFASHLFKGRAYVHCCMPNLDVRDIMRHEGQKDSIELYLSRLERGGKTVPNFQKEAFDRYAEIPEDAVCHNTFQTCEHQPMQQSGRVYAIALHSIYDIPADEFGAALLRKNVHTCYAAFHFSENLLLEDSYVNLDEINACFSRDGDKLTFSFASESTLNYCHSYSNILKYVCKTYFPASNREVYMKEFLVTRVNTWFCKFSRIDTFLLYKGVAHKSVDSEQFYTAMEDAWHYKKTLAMCNSERILLEDSSSVNYWFPKMRDMVIVPLFDISLETSKRTRKEVLVSKDFVFTVLNHIRTYQAKALTYANVLSFVESIRSRVIINGVTARSEWDVDKSLLQSLSMTFYLHTKLAVLKDDLLISKFSLGSKTVCQHVWDEISLAFGNAFPSVKERLLNRKLIRVAGDALEIRVPDLYVTFHDRLVTEYKASVDMPALDIRKKMEETEVMYNALSELSVLRESDKFDVDVFSQMCQSLEVDPMTAAKVIVAVMSNESGLTLTFERPTEANVALALQDQEKASEGALVVTSREVEEPSMKGSMARGELQLAGLAGDHPESSYSRNEEIESLEQFHMATADSLIRKQMSSIVYTGPIKVQQMKNFIDSLVASLSAAVSNLVKILKDTAAIDLETRQKFGVLDVASRKWLIKPTAKSHAWGVVETHARKYHVALLEYDEQGVVTCDDWRRVAVSSESVVYSDMAKLRTLRRLLRNGEPHVSSAKVVLVDGVPGCGKTKEILSRVNFDEDLILVPGKQAAEMIRRRANSSGIIVATKDNVKTVDSFMMNFGKSTRCQFKRLFIDEGLMLHTGCVNFLVAMSLCEIAYVYGDTQQIPYINRVSGFPYPAHFAKLEVDEVETRRTTLRCPADVTHYLNRRYEGFVMSTSSVKKSVSQEMVGGAAVINPISKPLHGKILTFTQSDKEALLSRGYSDVHTVHEVQGETYSDVSLVRLTPTPVSIIAGDSPHVLVALSRHTCSLKYYTVVMDPLVSIIRDLEKLSSYLLDMYKVDAGTQXQLQIDSVFKGSNLFVAAPKTGDISDMQFYYDKCLPGNSTMMNNFDAVTMRLTDISLNVKDCILDMSKSVAAPKDQIKPLTPMVRTAAEMPRQTGLLENLVAMIKRNFNAPELSGIIDIENTASLVVDKFFDSYLLKEKRKPNKNVSLFSRESLNRWLEKQEQVTIGQLADFDFVDLPAVDQYRHMIKAQPKQKLDTSIQTEYPALQTIVYHSKKINAIFGPLFSELTRQLLDSVDSSRFLFFTRKTPAQIEDFFGDLDSHVPMDVLELDISKYDKSQNEFHCAVEYEIWRRLGFEDFLGEVWKQGHRKTTLKDYTAGIKTCIWYQRKSGDVTTFIGNTVIIAACLASMLPMEKIIKGAFCGDDSLLYFPKGCEFPDVQHSANLMWNFEAKLFKKQYGYFCGRYVIHHDRGCIVYYDPLKLISKLGAKHIKDWEHLEEFRRSLCDVAVSLNNCAYYTQLDDAVREVHKTAPPGSFVYKSLVKFLSDKVLFRSLFIDGSSC.

The segment at 50–458 is methyltransferase; sequence FSKVISEEQT…QSLSMTFYLH (409 aa). An Alphavirus-like MT domain is found at 72-281; that stretch reads TFYNTQNAVH…HSYSNILKYV (210 aa). The 163-residue stretch at 801–963 folds into the (+)RNA virus helicase ATP-binding domain; the sequence is VVYSDMAKLR…KLEVDEVETR (163 aa). The tract at residues 830 to 1085 is helicase; sequence LVDGVPGCGK…RHTCSLKYYT (256 aa). 833–840 is a binding site for ATP; it reads GVPGCGKT. The (+)RNA virus helicase C-terminal domain occupies 964–1116; sequence RTTLRCPADV…DMYKVDAGTQ (153 aa). One can recognise a RdRp catalytic domain in the interval 1380–1493; that stretch reads MDVLELDISK…YFPKGCEFPD (114 aa).

Belongs to the ssRNA positive-strand viruses RNA-directed RNA polymerase family. Heterodimer of a large and a small subunit.

The catalysed reaction is RNA(n) + a ribonucleoside 5'-triphosphate = RNA(n+1) + diphosphate. It catalyses the reaction ATP + H2O = ADP + phosphate + H(+). Functionally, is an RNA-dependent RNA polymerase active in viral RNA replication. In terms of biological role, is a methyltransferase active in RNA capping and an RNA helicase. Methyltransferase displays a cytoplasmic capping enzyme activity. This function is necessary since all viral RNAs are synthesized in the cytoplasm, and host capping enzymes are restricted to the nucleus. Helicase region probably exhibits NTPase and RNA unwinding activities (Potential). It also acts as a suppressor of RNA-mediated gene silencing, also known as post-transcriptional gene silencing (PTGS), a mechanism of plant viral defense that limits the accumulation of viral RNAs. May mediate silencing suppression through either inhibition of HEN1-mediated siRNA or siRNA demethylation. The protein is Replicase large subunit of Nicotiana tabacum (Common tobacco).